The chain runs to 586 residues: Probable zinc metalloprotease EGY3, chloroplastic (586 aa).

A chloroplast-targeting transit peptide spans 1-54 (MSSSSLVTSLLFSSSSSSNTATSTSSRRSFSLFSKNQYCKPSPLRRSSSLLLVR). Positions 62–73 (EEKAAPAAESHH) are enriched in basic and acidic residues. The interval 62–118 (EEKAAPAAESHHAGGGQDDAATASHHAVEGENGVADADGGGVKKSKEELEEEEQQEV) is disordered. Positions 103–195 (VKKSKEELEE…NTFKALDLNK (93 aa)) form a coiled coil. The next 7 membrane-spanning stretches (helical) occupy residues 287-307 (LSAVALAVTTFGTIAIMSGFF), 318-338 (VSDVLPLFAGFLSILGVSEIA), 389-409 (ASAYLTSVALAVSAFVSDGSL), 427-447 (PLLSFVQAVIGPYADELGNVL), 454-474 (VGVPVDPLAFAGLLGIVVTSL), 506-526 (VALGAGAIIGGSVLCLAWGLF), and 550-570 (YAWGLVLAVVCLLTLFPNGGG).

Belongs to the peptidase M50B family.

The protein localises to the plastid. Its subcellular location is the chloroplast membrane. Probable membrane-associated metalloprotease that may be involved in chloroplast development. The sequence is that of Probable zinc metalloprotease EGY3, chloroplastic (EGY3) from Oryza sativa subsp. indica (Rice).